Here is a 284-residue protein sequence, read N- to C-terminus: Nucleotide-binding protein in ptsO 5'region (284 aa).

8–15 (GRSGSGKS) serves as a coordination point for ATP. 60–63 (DARN) provides a ligand contact to GTP.

Belongs to the RapZ-like family.

Its function is as follows. Displays ATPase and GTPase activities. This Pseudomonas putida (Arthrobacter siderocapsulatus) protein is Nucleotide-binding protein in ptsO 5'region.